Consider the following 481-residue polypeptide: Multiple inositol polyphosphate phosphatase 1 (481 aa).

A signal peptide spans 1–30; the sequence is MLRGARSHLPASVAPAAVLAAALLSSFARC. The active site involves His89. Asn236 and Asn475 each carry an N-linked (GlcNAc...) asparagine glycan. Residues 478 to 481 carry the Prevents secretion from ER motif; sequence SDEL.

Belongs to the histidine acid phosphatase family. MINPP1 subfamily. Post-translationally, N-glycosylated. In terms of tissue distribution, widely expressed with highest levels in kidney, intestine, thymus and liver.

It localises to the endoplasmic reticulum lumen. The protein localises to the secreted. Its subcellular location is the cell membrane. It carries out the reaction 1D-myo-inositol hexakisphosphate + H2O = 1D-myo-inositol 1,2,4,5,6-pentakisphosphate + phosphate. The enzyme catalyses 1D-myo-inositol 1,2,4,5,6-pentakisphosphate + H2O = 1D-myo-inositol 1,2,5,6-tetrakisphosphate + phosphate. The catalysed reaction is 1D-myo-inositol 1,2,5,6-tetrakisphosphate + H2O = 1D-myo-inositol 1,2,6-trisphosphate + phosphate. It catalyses the reaction 1D-myo-inositol 1,2,6-trisphosphate + H2O = 1D-myo-inositol 1,2-bisphosphate + phosphate. It carries out the reaction 1D-myo-inositol 1,2-bisphosphate + H2O = 1D-myo-inositol 2-phosphate + phosphate. The enzyme catalyses 1D-myo-inositol hexakisphosphate + H2O = 1D-myo-inositol 1,2,3,5,6-pentakisphosphate + phosphate. The catalysed reaction is 1D-myo-inositol 1,2,3,5,6-pentakisphosphate + H2O = 1D-myo-inositol 1,2,3,6-tetrakisphosphate + phosphate. It catalyses the reaction 1D-myo-inositol 1,2,3,6-tetrakisphosphate + H2O = 1D-myo-inositol 1,2,3-trisphosphate + phosphate. It carries out the reaction 1D-myo-inositol 1,2,3-trisphosphate + H2O = 1D-myo-inositol 2,3-bisphosphate + phosphate. The enzyme catalyses 1D-myo-inositol 2,3-bisphosphate + H2O = 1D-myo-inositol 2-phosphate + phosphate. The catalysed reaction is 1D-myo-inositol 1,3,4,5,6-pentakisphosphate + H2O = 1D-myo-inositol 1,4,5,6-tetrakisphosphate + phosphate. It catalyses the reaction 1D-myo-inositol 1,4,5,6-tetrakisphosphate + H2O = 1D-myo-inositol 1,4,5-trisphosphate + phosphate. It carries out the reaction (2R)-2,3-bisphosphoglycerate + H2O = (2R)-2-phosphoglycerate + phosphate. In terms of biological role, multiple inositol polyphosphate phosphatase that hydrolyzes 1D-myo-inositol 1,3,4,5,6-pentakisphosphate (InsP5[2OH]) and 1D-myo-inositol hexakisphosphate (InsP6) to a range of less phosphorylated inositol phosphates. This regulates the availability of these various small molecule second messengers and metal chelators which control many aspects of cell physiology. Has a weak in vitro activity towards 1D-myo-inositol 1,4,5-trisphosphate which is unlikely to be physiologically relevant. By regulating intracellular inositol polyphosphates pools, which act as metal chelators, it may control the availability of intracellular calcium and iron, which are important for proper neuronal development and homeostasis. May have a dual substrate specificity, and function as a 2,3-bisphosphoglycerate 3-phosphatase hydrolyzing 2,3-bisphosphoglycerate to 2-phosphoglycerate. 2,3-bisphosphoglycerate (BPG) is formed as part of the Rapoport-Luebering glycolytic bypass and is a regulator of systemic oxygen homeostasis as the major allosteric effector of hemoglobin. The chain is Multiple inositol polyphosphate phosphatase 1 from Mus musculus (Mouse).